The sequence spans 241 residues: Small ribosomal subunit protein uS3 (241 aa).

Positions 39 to 109 (IRQHVEKNLS…QIRINVIEVS (71 aa)) constitute a KH type-2 domain. The segment at 215–241 (EQAMAAPAPTPRKKRRPQQFEDRSNEE) is disordered. The span at 232–241 (QQFEDRSNEE) shows a compositional bias: basic and acidic residues.

Belongs to the universal ribosomal protein uS3 family. In terms of assembly, part of the 30S ribosomal subunit. Forms a tight complex with proteins S10 and S14.

Binds the lower part of the 30S subunit head. Binds mRNA in the 70S ribosome, positioning it for translation. The chain is Small ribosomal subunit protein uS3 from Crocosphaera subtropica (strain ATCC 51142 / BH68) (Cyanothece sp. (strain ATCC 51142)).